Reading from the N-terminus, the 51-residue chain is Insulin (51 aa).

Cystine bridges form between Cys7/Cys36, Cys19/Cys49, and Cys35/Cys40.

This sequence belongs to the insulin family. Heterodimer of a B chain and an A chain linked by two disulfide bonds.

It localises to the secreted. Insulin decreases blood glucose concentration. It increases cell permeability to monosaccharides, amino acids and fatty acids. It accelerates glycolysis, the pentose phosphate cycle, and glycogen synthesis in liver. This is Insulin (INS) from Myocastor coypus (Coypu).